The following is a 464-amino-acid chain: Argininosuccinate lyase (464 aa).

The protein belongs to the lyase 1 family. Argininosuccinate lyase subfamily.

Its subcellular location is the cytoplasm. It carries out the reaction 2-(N(omega)-L-arginino)succinate = fumarate + L-arginine. The protein operates within amino-acid biosynthesis; L-arginine biosynthesis; L-arginine from L-ornithine and carbamoyl phosphate: step 3/3. In Azotobacter vinelandii (strain DJ / ATCC BAA-1303), this protein is Argininosuccinate lyase.